The sequence spans 521 residues: Beta-glucosidase 6 (521 aa).

A signal peptide spans 1 to 38; the sequence is MGRIKSSSGRCSTARLEAVAVLVVVFGVASSSLRGCIA. A beta-D-glucoside contacts are provided by residues glutamine 64, histidine 165, and 210-211; that span reads NE. Glutamate 211 functions as the Proton donor in the catalytic mechanism. A disulfide bridge links cysteine 230 with cysteine 238. Asparagine 291 is a glycosylation site (N-linked (GlcNAc...) asparagine). Tyrosine 354 is an a beta-D-glucoside binding site. N-linked (GlcNAc...) asparagine glycosylation is found at asparagine 362 and asparagine 372. A beta-D-glucoside-binding positions include glutamate 427, tryptophan 477, 484–485, and phenylalanine 493; that span reads EW. The active-site Nucleophile is the glutamate 427.

It belongs to the glycosyl hydrolase 1 family. As to quaternary structure, homodimer.

Its subcellular location is the secreted. It catalyses the reaction Hydrolysis of terminal, non-reducing beta-D-glucosyl residues with release of beta-D-glucose.. Hydrolyzes glycosides, oligosaccharides and hydrophobic glycosides. Possesses gibberellin ester beta-D-glucosidase activity. Can hydrolyze gibberellin A4 beta-D-glucosyl ester in vitro. In Oryza sativa subsp. japonica (Rice), this protein is Beta-glucosidase 6.